The following is a 313-amino-acid chain: MDKQSKIILISGPTASGKSNFAVKIAKKIEGEIINADSMQVYKKLKILTARPNKQEQKNIKHHLYGFVDLNEKFSTGQWLELTIKKIENIQKKKKIPILVGGTGLYFQSLINGLVKIPEIPLKFRNKVRLMSKKEGQKKFYKKLLKLDPKIKDKFDPNDTQRSIRAYEIKSYTNISMYDWLAKTKSEFNDSDFLKLHIDTKREKLVEKINLRTSSMLNNGAISEVKKFLKLKIKKDQSVNKVIGIAELTQYLNDEITLDEAEELISIKTRQYAKRQATWARTRMTSWIKVDPIKLDGYIKKLKKSSLKLDQLT.

ATP is bound at residue 12–19 (GPTASGKS). 14–19 (TASGKS) lines the substrate pocket. Interaction with substrate tRNA regions lie at residues 37 to 40 (DSMQ) and 161 to 165 (QRSIR).

It belongs to the IPP transferase family. In terms of assembly, monomer. The cofactor is Mg(2+).

The catalysed reaction is adenosine(37) in tRNA + dimethylallyl diphosphate = N(6)-dimethylallyladenosine(37) in tRNA + diphosphate. In terms of biological role, catalyzes the transfer of a dimethylallyl group onto the adenine at position 37 in tRNAs that read codons beginning with uridine, leading to the formation of N6-(dimethylallyl)adenosine (i(6)A). The polypeptide is tRNA dimethylallyltransferase (Pelagibacter ubique (strain HTCC1062)).